The following is a 210-amino-acid chain: FMN-dependent NADH:quinone oxidoreductase (210 aa).

FMN contacts are provided by residues S17–S19, M102–L105, and S148–G151.

This sequence belongs to the azoreductase type 1 family. Homodimer. It depends on FMN as a cofactor.

The enzyme catalyses 2 a quinone + NADH + H(+) = 2 a 1,4-benzosemiquinone + NAD(+). It catalyses the reaction N,N-dimethyl-1,4-phenylenediamine + anthranilate + 2 NAD(+) = 2-(4-dimethylaminophenyl)diazenylbenzoate + 2 NADH + 2 H(+). Its function is as follows. Quinone reductase that provides resistance to thiol-specific stress caused by electrophilic quinones. Functionally, also exhibits azoreductase activity. Catalyzes the reductive cleavage of the azo bond in aromatic azo compounds to the corresponding amines. The chain is FMN-dependent NADH:quinone oxidoreductase from Trichlorobacter lovleyi (strain ATCC BAA-1151 / DSM 17278 / SZ) (Geobacter lovleyi).